The sequence spans 680 residues: MMVESASETIRSAPSGQNGVGSLSGQADGSSGGATGTTASGTGREVTTGADSNGEMSPAELLHFQQQQALQVARQFLLQQASGLSSPGNNDSKQSASAVQVPVSVAMMSPQMLTPQQMQQILSPPQLQALLQQQQALMLQQLQEYYKKQQEQLHLQLLTQQQAGKPQPKEALGNKQLAFQQQLLQMQQLQQQHLLNLQRQGLVSLQPNQASGPLQTLPQAAVCPTDLPQLWKGEGAPGQPAEDSVKQEGLDLTGTAATATSFAAPPKVSPPLSHHTLPNGQPTVLTSRRDSSSHEETPGSHPLYGHGECKWPGCETLCEDLGQFIKHLNTEHALDDRSTAQCRVQMQVVQQLEIQLAKESERLQAMMAHLHMRPSEPKPFSQPLNPVPGSSSFSKVTVSAADSFPDGLVHPPTSAAAPVTPLRPPGLGSASLHGGGPARRRSSDKFCSPISSELAQNHEFYKNADVRPPFTYASLIRQAILETPDRQLTLNEIYNWFTRMFAYFRRNTATWKNAVRHNLSLHKCFVRVENVKGAVWTVDEREYQKRRPPKMTGSPTLVKNMISGLSYGALNASYQAALAESSFPLLNSPGMLNPGSASSLLPLSHDDVGAPVEPLPSNGSSSPPRLSPPQYSHQVQVKEEPAEAEEDRQPGPPLGAPNPSASGPPEDRDLEEELPGEELS.

Residues 1–17 are compositionally biased toward polar residues; it reads MMVESASETIRSAPSGQ. The tract at residues 1–56 is disordered; that stretch reads MMVESASETIRSAPSGQNGVGSLSGQADGSSGGATGTTASGTGREVTTGADSNGEM. 2 positions are modified to phosphoserine: serine 52 and serine 86. Glycyl lysine isopeptide (Lys-Gly) (interchain with G-Cter in SUMO2) cross-links involve residues lysine 175 and lysine 246. The disordered stretch occupies residues 262–306; it reads FAAPPKVSPPLSHHTLPNGQPTVLTSRRDSSSHEETPGSHPLYGH. Over residues 276-286 the composition is skewed to polar residues; sequence TLPNGQPTVLT. Residues 287–298 show a composition bias toward basic and acidic residues; it reads SRRDSSSHEETP. The C2H2-type zinc-finger motif lies at 307-332; it reads GECKWPGCETLCEDLGQFIKHLNTEH. Positions 349 to 370 are leucine-zipper; it reads VQQLEIQLAKESERLQAMMAHL. Residue lysine 378 forms a Glycyl lysine isopeptide (Lys-Gly) (interchain with G-Cter in SUMO2) linkage. The disordered stretch occupies residues 407–445; the sequence is GLVHPPTSAAAPVTPLRPPGLGSASLHGGGPARRRSSDK. A DNA-binding region (fork-head) is located at residues 467-559; sequence RPPFTYASLI…KMTGSPTLVK (93 aa). Serine 554 carries the post-translational modification Phosphoserine. Residues 602–680 form a disordered region; it reads PLSHDDVGAP…EEELPGEELS (79 aa). Positions 617 to 635 are enriched in polar residues; it reads SNGSSSPPRLSPPQYSHQV. Residues 668–680 show a composition bias toward acidic residues; that stretch reads RDLEEELPGEELS.

In terms of assembly, forms homodimers and heterodimers with FOXP1 and FOXP2. Dimerization is required for DNA-binding.

The protein resides in the nucleus. Functionally, transcriptional repressor that represses lung-specific expression. The polypeptide is Forkhead box protein P4 (FOXP4) (Homo sapiens (Human)).